Consider the following 232-residue polypeptide: Large ribosomal subunit protein uL1 (232 aa).

The protein belongs to the universal ribosomal protein uL1 family. As to quaternary structure, part of the 50S ribosomal subunit.

Functionally, binds directly to 23S rRNA. The L1 stalk is quite mobile in the ribosome, and is involved in E site tRNA release. Protein L1 is also a translational repressor protein, it controls the translation of the L11 operon by binding to its mRNA. The protein is Large ribosomal subunit protein uL1 of Bartonella bacilliformis (strain ATCC 35685 / KC583 / Herrer 020/F12,63).